A 461-amino-acid chain; its full sequence is Bifunctional protein GlmU (461 aa).

The tract at residues 1 to 232 is pyrophosphorylase; it reads MNLQIIILAA…SFEVQGINNR (232 aa). UDP-N-acetyl-alpha-D-glucosamine is bound by residues 8–11, K22, Q73, and 78–79; these read LAAG and GT. D102 is a Mg(2+) binding site. UDP-N-acetyl-alpha-D-glucosamine contacts are provided by G142, E157, and N230. Residue N230 coordinates Mg(2+). Residues 233–253 form a linker region; it reads QQLQQLERIWQQRAANQLMEK. The interval 254–461 is N-acetyltransferase; that stretch reads GATLADANRF…WKRPVKRERD (208 aa). Residues R336 and K354 each contribute to the UDP-N-acetyl-alpha-D-glucosamine site. The active-site Proton acceptor is H366. Y369 and N380 together coordinate UDP-N-acetyl-alpha-D-glucosamine. Acetyl-CoA contacts are provided by residues A383, 389–390, S408, and A426; that span reads NY.

It in the N-terminal section; belongs to the N-acetylglucosamine-1-phosphate uridyltransferase family. The protein in the C-terminal section; belongs to the transferase hexapeptide repeat family. Homotrimer. Requires Mg(2+) as cofactor.

The protein localises to the cytoplasm. It carries out the reaction alpha-D-glucosamine 1-phosphate + acetyl-CoA = N-acetyl-alpha-D-glucosamine 1-phosphate + CoA + H(+). The enzyme catalyses N-acetyl-alpha-D-glucosamine 1-phosphate + UTP + H(+) = UDP-N-acetyl-alpha-D-glucosamine + diphosphate. The protein operates within nucleotide-sugar biosynthesis; UDP-N-acetyl-alpha-D-glucosamine biosynthesis; N-acetyl-alpha-D-glucosamine 1-phosphate from alpha-D-glucosamine 6-phosphate (route II): step 2/2. It participates in nucleotide-sugar biosynthesis; UDP-N-acetyl-alpha-D-glucosamine biosynthesis; UDP-N-acetyl-alpha-D-glucosamine from N-acetyl-alpha-D-glucosamine 1-phosphate: step 1/1. It functions in the pathway bacterial outer membrane biogenesis; LPS lipid A biosynthesis. Catalyzes the last two sequential reactions in the de novo biosynthetic pathway for UDP-N-acetylglucosamine (UDP-GlcNAc). The C-terminal domain catalyzes the transfer of acetyl group from acetyl coenzyme A to glucosamine-1-phosphate (GlcN-1-P) to produce N-acetylglucosamine-1-phosphate (GlcNAc-1-P), which is converted into UDP-GlcNAc by the transfer of uridine 5-monophosphate (from uridine 5-triphosphate), a reaction catalyzed by the N-terminal domain. The sequence is that of Bifunctional protein GlmU from Legionella pneumophila subsp. pneumophila (strain Philadelphia 1 / ATCC 33152 / DSM 7513).